Here is a 369-residue protein sequence, read N- to C-terminus: Putative 2-aminoethylphosphonate import ATP-binding protein PhnT (369 aa).

The 232-residue stretch at 19 to 250 (IVLDSLRVAY…PPNRFAAEFL (232 aa)) folds into the ABC transporter domain. 51–58 (GPSGSGKT) contacts ATP.

Belongs to the ABC transporter superfamily. 2-aminoethylphosphonate importer (TC 3.A.1.11.5) family.

It localises to the cell inner membrane. Probably part of the PhnSTUV complex (TC 3.A.1.11.5) involved in 2-aminoethylphosphonate import. Probably responsible for energy coupling to the transport system. The chain is Putative 2-aminoethylphosphonate import ATP-binding protein PhnT (phnT) from Salmonella paratyphi A (strain ATCC 9150 / SARB42).